Reading from the N-terminus, the 448-residue chain is Exodeoxyribonuclease 7 large subunit (448 aa).

Belongs to the XseA family. In terms of assembly, heterooligomer composed of large and small subunits.

The protein localises to the cytoplasm. It carries out the reaction Exonucleolytic cleavage in either 5'- to 3'- or 3'- to 5'-direction to yield nucleoside 5'-phosphates.. Functionally, bidirectionally degrades single-stranded DNA into large acid-insoluble oligonucleotides, which are then degraded further into small acid-soluble oligonucleotides. This Tolumonas auensis (strain DSM 9187 / NBRC 110442 / TA 4) protein is Exodeoxyribonuclease 7 large subunit.